Here is a 606-residue protein sequence, read N- to C-terminus: UvrABC system protein C (606 aa).

Residues 18–96 (SQPGVYRMMN…IKSLNPRYNI (79 aa)) enclose the GIY-YIG domain. Residues 205 to 240 (TEVLKSITRKMHEAAEEQEYEQAALFRDQIQSLRKI) enclose the UVR domain.

The protein belongs to the UvrC family. In terms of assembly, interacts with UvrB in an incision complex.

Its subcellular location is the cytoplasm. Its function is as follows. The UvrABC repair system catalyzes the recognition and processing of DNA lesions. UvrC both incises the 5' and 3' sides of the lesion. The N-terminal half is responsible for the 3' incision and the C-terminal half is responsible for the 5' incision. The sequence is that of UvrABC system protein C from Nitrosospira multiformis (strain ATCC 25196 / NCIMB 11849 / C 71).